Consider the following 266-residue polypeptide: GRIP and coiled-coil domain-containing protein C365.11 (266 aa).

The span at 1-13 (METTVSAKNSLEN) shows a compositional bias: polar residues. A disordered region spans residues 1–88 (METTVSAKNS…LDEKVKELEN (88 aa)). Ser10 bears the Phosphoserine mark. Residues 36 to 49 (ASKKKRKNRKKKKN) show a composition bias toward basic residues. The span at 63 to 88 (EEQRSGSIDSKDKEKPLDEKVKELEN) shows a compositional bias: basic and acidic residues. Residues 73–188 (KDKEKPLDEK…ESVKSHESEL (116 aa)) adopt a coiled-coil conformation. A phosphoserine mark is found at Ser202 and Ser204. Residues 216–264 (ISKELINKEYARNVLLQFLENHEHRDKILPILSTALDLEEVHQHLILKN) enclose the GRIP domain.

It is found in the cytoplasm. This chain is GRIP and coiled-coil domain-containing protein C365.11, found in Schizosaccharomyces pombe (strain 972 / ATCC 24843) (Fission yeast).